We begin with the raw amino-acid sequence, 812 residues long: Lon protease (812 aa).

A Lon N-terminal domain is found at 12-205 (LPMLPLRGVL…YLCELLAKEM (194 aa)). 357 to 364 (GPPGVGKT) is a binding site for ATP. The 182-residue stretch at 593 to 774 (ENQVGVATGL…DEVLEETLLK (182 aa)) folds into the Lon proteolytic domain. Residues Ser-680 and Lys-723 contribute to the active site.

It belongs to the peptidase S16 family. Homohexamer. Organized in a ring with a central cavity.

It localises to the cytoplasm. The enzyme catalyses Hydrolysis of proteins in presence of ATP.. ATP-dependent serine protease that mediates the selective degradation of mutant and abnormal proteins as well as certain short-lived regulatory proteins. Required for cellular homeostasis and for survival from DNA damage and developmental changes induced by stress. Degrades polypeptides processively to yield small peptide fragments that are 5 to 10 amino acids long. Binds to DNA in a double-stranded, site-specific manner. This Syntrophomonas wolfei subsp. wolfei (strain DSM 2245B / Goettingen) protein is Lon protease.